The sequence spans 128 residues: Large ribosomal subunit protein mL51 (128 aa).

The N-terminal 31 residues, 1–31, are a transit peptide targeting the mitochondrion; sequence MAGSLSWVAGRRLWGLVPLACRSFFLGVPRL.

This sequence belongs to the mitochondrion-specific ribosomal protein mL51 family. As to quaternary structure, component of the mitochondrial ribosome large subunit (39S) which comprises a 16S rRNA and about 50 distinct proteins. Interacts with OXA1L.

Its subcellular location is the mitochondrion. In Bos taurus (Bovine), this protein is Large ribosomal subunit protein mL51 (MRPL51).